Reading from the N-terminus, the 280-residue chain is Golgi phosphoprotein 3-like (280 aa).

The interval 1–30 (MTTLTRRGRRADVGQENRVDSEDYIKDKDE) is disordered. A compositionally biased stretch (basic and acidic residues) spans 10–30 (RADVGQENRVDSEDYIKDKDE). 4 residues coordinate a 1,2-diacyl-sn-glycero-3-phospho-(1D-myo-inositol 4-phosphate): W62, R71, R152, and R155. The interval 171–182 (EKQNFLLFDMTT) is beta-hairpin required for oligomerization.

This sequence belongs to the GOLPH3/VPS74 family. As to quaternary structure, homooligomer.

It is found in the golgi apparatus. The protein resides in the golgi stack membrane. Its subcellular location is the trans-Golgi network membrane. Functionally, phosphatidylinositol-4-phosphate-binding protein that may play a role in the process of vesicle budding at the Golgi and anterograde transport to the plasma membrane. This chain is Golgi phosphoprotein 3-like (golph3l), found in Xenopus tropicalis (Western clawed frog).